Reading from the N-terminus, the 848-residue chain is Trimethylamine-N-oxide reductase 1 (848 aa).

Residues methionine 1 to alanine 39 constitute a signal peptide (tat-type signal). Serine 191 provides a ligand contact to Mo-bis(molybdopterin guanine dinucleotide).

Belongs to the prokaryotic molybdopterin-containing oxidoreductase family. Interacts with the N-terminal domain of TorC. Requires Mo-bis(molybdopterin guanine dinucleotide) as cofactor. Predicted to be exported by the Tat system. The position of the signal peptide cleavage has not been experimentally proven.

It localises to the periplasm. The catalysed reaction is trimethylamine + 2 Fe(III)-[cytochrome c] + H2O = trimethylamine N-oxide + 2 Fe(II)-[cytochrome c] + 3 H(+). Its function is as follows. Reduces trimethylamine-N-oxide (TMAO) into trimethylamine; an anaerobic reaction coupled to energy-yielding reactions. The polypeptide is Trimethylamine-N-oxide reductase 1 (torA) (Escherichia coli O157:H7).